Reading from the N-terminus, the 455-residue chain is ATP-dependent protease ATPase subunit HslU (455 aa).

ATP-binding positions include Ile19 and 61–66 (GVGKTE). Positions 144–163 (ESKVGFANEPAEDAASKKEK) are disordered. 3 residues coordinate ATP: Asp268, Glu333, and Arg405.

It belongs to the ClpX chaperone family. HslU subfamily. As to quaternary structure, a double ring-shaped homohexamer of HslV is capped on each side by a ring-shaped HslU homohexamer. The assembly of the HslU/HslV complex is dependent on binding of ATP.

Its subcellular location is the cytoplasm. Its function is as follows. ATPase subunit of a proteasome-like degradation complex; this subunit has chaperone activity. The binding of ATP and its subsequent hydrolysis by HslU are essential for unfolding of protein substrates subsequently hydrolyzed by HslV. HslU recognizes the N-terminal part of its protein substrates and unfolds these before they are guided to HslV for hydrolysis. The sequence is that of ATP-dependent protease ATPase subunit HslU from Francisella tularensis subsp. novicida (strain U112).